The sequence spans 202 residues: Recombination protein RecR (202 aa).

The C4-type zinc finger occupies 61 to 76 (CARCNSFTEDEVCATC). Positions 84 to 179 (GLLCIVETPA…KVTRLARGVP (96 aa)) constitute a Toprim domain.

It belongs to the RecR family.

In terms of biological role, may play a role in DNA repair. It seems to be involved in an RecBC-independent recombinational process of DNA repair. It may act with RecF and RecO. This chain is Recombination protein RecR, found in Bordetella bronchiseptica (strain ATCC BAA-588 / NCTC 13252 / RB50) (Alcaligenes bronchisepticus).